A 489-amino-acid polypeptide reads, in one-letter code: Netrin-5 (489 aa).

An N-terminal signal peptide occupies residues 1 to 16 (MPVTFALLLLLGQATA). The N-linked (GlcNAc...) asparagine glycan is linked to Asn62. 15 cysteine pairs are disulfide-bonded: Cys157/Cys166, Cys159/Cys175, Cys177/Cys186, Cys189/Cys209, Cys212/Cys221, Cys214/Cys239, Cys242/Cys251, Cys254/Cys272, Cys275/Cys287, Cys277/Cys294, Cys296/Cys305, Cys308/Cys322, Cys345/Cys418, Cys349/Cys420, and Cys364/Cys475. 3 Laminin EGF-like domains span residues 157–211 (CQCH…PCLP), 212–274 (CSCN…ACRA), and 275–324 (CQCH…PCQR). The NTR domain occupies 345–475 (CQNYCNMSDT…LQQEERAGGC (131 aa)). The segment at 470–489 (ERAGGCRGVRAPTPSPRPEH) is disordered.

The protein resides in the secreted. In terms of biological role, plays a role in neurogenesis. Prevents motor neuron cell body migration out of the neural tube. This is Netrin-5 (NTN5) from Homo sapiens (Human).